Consider the following 699-residue polypeptide: Elongation factor G 1 (699 aa).

The tr-type G domain maps to 8–290 (ERYRNIGICA…AVIEYLPSPT (283 aa)). Residues 17–24 (AHVDAGKT), 88–92 (DTPGH), and 142–145 (NKMD) contribute to the GTP site.

Belongs to the TRAFAC class translation factor GTPase superfamily. Classic translation factor GTPase family. EF-G/EF-2 subfamily.

Its subcellular location is the cytoplasm. Its function is as follows. Catalyzes the GTP-dependent ribosomal translocation step during translation elongation. During this step, the ribosome changes from the pre-translocational (PRE) to the post-translocational (POST) state as the newly formed A-site-bound peptidyl-tRNA and P-site-bound deacylated tRNA move to the P and E sites, respectively. Catalyzes the coordinated movement of the two tRNA molecules, the mRNA and conformational changes in the ribosome. The protein is Elongation factor G 1 of Hahella chejuensis (strain KCTC 2396).